The chain runs to 636 residues: Biosynthetic arginine decarboxylase (636 aa).

Lys101 is subject to N6-(pyridoxal phosphate)lysine. 286-296 serves as a coordination point for substrate; it reads FDVGGGLAVDY.

Belongs to the Orn/Lys/Arg decarboxylase class-II family. SpeA subfamily. Requires Mg(2+) as cofactor. Pyridoxal 5'-phosphate is required as a cofactor.

The catalysed reaction is L-arginine + H(+) = agmatine + CO2. The protein operates within amine and polyamine biosynthesis; agmatine biosynthesis; agmatine from L-arginine: step 1/1. Functionally, catalyzes the biosynthesis of agmatine from arginine. In Shewanella frigidimarina (strain NCIMB 400), this protein is Biosynthetic arginine decarboxylase.